A 702-amino-acid polypeptide reads, in one-letter code: Polyribonucleotide nucleotidyltransferase (702 aa).

Residues D493 and D499 each coordinate Mg(2+). The KH domain occupies 559–619; sequence PKVEIFNVDP…NLISQSKEYI (61 aa). Residues 643-702 enclose the S1 motif domain; the sequence is GEEFLGRVQKVVEFGVFVELKEGVDGLLHNSKIKEKLEVGHEIKVKVAEIKNGKVSLDLA.

It belongs to the polyribonucleotide nucleotidyltransferase family. Requires Mg(2+) as cofactor.

It localises to the cytoplasm. It carries out the reaction RNA(n+1) + phosphate = RNA(n) + a ribonucleoside 5'-diphosphate. Its function is as follows. Involved in mRNA degradation. Catalyzes the phosphorolysis of single-stranded polyribonucleotides processively in the 3'- to 5'-direction. This is Polyribonucleotide nucleotidyltransferase from Campylobacter lari (strain RM2100 / D67 / ATCC BAA-1060).